Consider the following 541-residue polypeptide: Chaperonin GroEL 1 (541 aa).

Residues Thr-29–Pro-32, Asp-86–Thr-90, Gly-413, Asn-477–Ala-479, and Asp-493 each bind ATP.

This sequence belongs to the chaperonin (HSP60) family. As to quaternary structure, forms a cylinder of 14 subunits composed of two heptameric rings stacked back-to-back. Interacts with the co-chaperonin GroES.

Its subcellular location is the cytoplasm. It carries out the reaction ATP + H2O + a folded polypeptide = ADP + phosphate + an unfolded polypeptide.. Functionally, together with its co-chaperonin GroES, plays an essential role in assisting protein folding. The GroEL-GroES system forms a nano-cage that allows encapsulation of the non-native substrate proteins and provides a physical environment optimized to promote and accelerate protein folding. This is Chaperonin GroEL 1 from Paenarthrobacter aurescens (strain TC1).